The primary structure comprises 300 residues: Cation-efflux pump FieF (300 aa).

A helical transmembrane segment spans residues 24–44 (LLIKIFAWWYTGSVSILAALV). Zn(2+) is bound by residues aspartate 45 and aspartate 49. Transmembrane regions (helical) follow at residues 82-102 (AALAQSMFISGSALFLFLTSI) and 114-134 (PGVGIGVTVIALICTIILVTF). 2 residues coordinate Zn(2+): histidine 153 and aspartate 157. Transmembrane regions (helical) follow at residues 156-176 (SDVMMNGAILIALGLSWYGWH) and 178-198 (ADALFALGIGIYILYSALRMG).

This sequence belongs to the cation diffusion facilitator (CDF) transporter (TC 2.A.4) family. FieF subfamily. In terms of assembly, homodimer.

Its subcellular location is the cell inner membrane. The enzyme catalyses Zn(2+)(in) + H(+)(out) = Zn(2+)(out) + H(+)(in). The catalysed reaction is Cd(2+)(in) + H(+)(out) = Cd(2+)(out) + H(+)(in). It catalyses the reaction Fe(2+)(in) + H(+)(out) = Fe(2+)(out) + H(+)(in). Divalent metal cation transporter which exports Zn(2+), Cd(2+) and possibly Fe(2+). May be involved in zinc and iron detoxification by efflux. This Salmonella choleraesuis (strain SC-B67) protein is Cation-efflux pump FieF.